The sequence spans 272 residues: Type II secretion system protein C (272 aa).

The Cytoplasmic portion of the chain corresponds to 1–16; it reads MNISKLPPLSPSVIRR. A helical membrane pass occupies residues 17–35; sequence ILFYLLMLLFCQQLAMIFW. Over 36–272 the chain is Periplasmic; the sequence is RIGLPDNAPV…DIYMEFGGDE (237 aa).

It belongs to the GSP C family.

It localises to the cell inner membrane. Functionally, involved in a type II secretion system (T2SS, formerly general secretion pathway, GSP) for the export of proteins. Required for the translocation of the multiple pectic enzymes. The sequence is that of Type II secretion system protein C (outC) from Dickeya dadantii (strain 3937) (Erwinia chrysanthemi (strain 3937)).